The primary structure comprises 77 residues: Large ribosomal subunit protein bL28 (77 aa).

This sequence belongs to the bacterial ribosomal protein bL28 family.

This is Large ribosomal subunit protein bL28 from Methylibium petroleiphilum (strain ATCC BAA-1232 / LMG 22953 / PM1).